The following is a 208-amino-acid chain: Coiled-coil domain-containing protein 25 (208 aa).

At 1-105 (MVFYFTSSSV…SNLKKTADMD (105 aa)) the chain is on the extracellular side. The DNA-binding stretch occupies residues 21–25 (KDKYE). Residue lysine 23 is modified to N6-acetyllysine. A helical transmembrane segment spans residues 106-122 (VGQIGFHRQKDVKIVTV). Positions 117 to 187 (VKIVTVEKKV…REMDELRSYS (71 aa)) form a coiled coil. At 123–208 (EKKVNEILNR…QDGNDSDEFM (86 aa)) the chain is on the cytoplasmic side. Residues 144–184 (LAAEKEGRDREERNEKKAQIQEMKRKEKEEMKKKREMDELR) are compositionally biased toward basic and acidic residues. The interval 144-208 (LAAEKEGRDR…QDGNDSDEFM (65 aa)) is disordered. Serine 204 is modified (phosphoserine).

This sequence belongs to the CCDC25 family. As to quaternary structure, interacts (via cytoplasmic region) with ILK.

The protein resides in the cell membrane. Its subcellular location is the endomembrane system. In terms of biological role, transmembrane receptor that senses neutrophil extracellular traps (NETs) and triggers the ILK-PARVB pathway to enhance cell motility. NETs are mainly composed of DNA fibers and are released by neutrophils to bind pathogens during inflammation. Formation of NETs is also associated with cancer metastasis, NET-DNA acting as a chemotactic factor to attract cancer cells. Specifically binds NETs on its extracellular region, in particular the 8-OHdG-enriched DNA present in NETs, and recruits ILK, initiating the ILK-PARVB cascade to induce cytoskeleton rearrangement and directional migration of cells. In the context of cancer, promotes cancer metastasis by sensing NETs and promoting migration of tumor cells. The polypeptide is Coiled-coil domain-containing protein 25 (Mus musculus (Mouse)).